A 473-amino-acid polypeptide reads, in one-letter code: Lactate utilization protein B (473 aa).

4Fe-4S ferredoxin-type domains follow at residues 302–332 (GSEF…GHSY) and 351–380 (YDDY…LHDL). Residues cysteine 311, cysteine 314, cysteine 317, cysteine 321, cysteine 364, cysteine 367, and cysteine 371 each contribute to the [4Fe-4S] cluster site.

Belongs to the LutB/YkgF family.

In terms of biological role, is involved in L-lactate degradation and allows cells to grow with lactate as the sole carbon source. Has probably a role as an electron transporter during oxidation of L-lactate. The polypeptide is Lactate utilization protein B (Bacillus anthracis (strain A0248)).